Consider the following 266-residue polypeptide: Glucosamine-6-phosphate deaminase (266 aa).

Asp72 (proton acceptor; for enolization step) is an active-site residue. The active-site For ring-opening step is Asp141. The active-site Proton acceptor; for ring-opening step is His143. Catalysis depends on Glu148, which acts as the For ring-opening step.

This sequence belongs to the glucosamine/galactosamine-6-phosphate isomerase family. NagB subfamily. In terms of assembly, homohexamer.

It catalyses the reaction alpha-D-glucosamine 6-phosphate + H2O = beta-D-fructose 6-phosphate + NH4(+). It functions in the pathway amino-sugar metabolism; N-acetylneuraminate degradation; D-fructose 6-phosphate from N-acetylneuraminate: step 5/5. Allosterically activated by N-acetylglucosamine 6-phosphate (GlcNAc6P). In terms of biological role, catalyzes the reversible isomerization-deamination of glucosamine 6-phosphate (GlcN6P) to form fructose 6-phosphate (Fru6P) and ammonium ion. This Tolumonas auensis (strain DSM 9187 / NBRC 110442 / TA 4) protein is Glucosamine-6-phosphate deaminase.